A 413-amino-acid polypeptide reads, in one-letter code: Putative glutamate synthase [NADPH] small chain (413 aa).

[4Fe-4S] cluster-binding residues include cysteine 33, cysteine 37, cysteine 43, and cysteine 47.

In terms of assembly, aggregate of 4 catalytic active heterodimers, consisting of a large and a small subunit. It depends on [4Fe-4S] cluster as a cofactor.

The catalysed reaction is 2 L-glutamate + NADP(+) = L-glutamine + 2-oxoglutarate + NADPH + H(+). It participates in amino-acid biosynthesis; L-glutamate biosynthesis via GLT pathway; L-glutamate from 2-oxoglutarate and L-glutamine (NADP(+) route): step 1/1. The protein operates within energy metabolism; nitrogen metabolism. In Cereibacter sphaeroides (Rhodobacter sphaeroides), this protein is Putative glutamate synthase [NADPH] small chain (gltD).